The following is a 751-amino-acid chain: WD repeat-containing protein 91 (751 aa).

A coiled-coil region spans residues 183–205 (QKIACLQEENEIMRQKLFALQAE). Positions 237 to 398 (ELGSNIMSSH…GARKEEKPAQ (162 aa)) are disordered. Residues 238 to 267 (LGSNIMSSHSNTNMNTPSQRTSGFLSSLLA) are compositionally biased toward polar residues. Basic and acidic residues predominate over residues 356-373 (TEKKAENSDADPDLRSDT). WD repeat units follow at residues 410–449 (EHHSSIMHCRVDCSGRRVASLDVDGVIKIWSLDGIMQTKA), 452–492 (ISKS…NLCE), 517–559 (SAAA…QQLQ), 564–603 (PVPIAVNCTAFNHNGNLLVTGAADGFIRLFDMQQHQCALS), 606–645 (AHMGEVYSVDFSYDENAVYSIGEDGKFIQWDIHKSGQKVS), 668–706 (VQFPRGRLFAFDSEGKYMLTCSSTGGVIYKLNSDGSTLE), and 713–751 (GHRAPVVTVDWSTAVECGTCLTASMDGKIKLTTLLAQKS).

Belongs to the WD repeat WDR91 family.

The protein resides in the early endosome membrane. Its subcellular location is the late endosome membrane. In terms of biological role, functions as a negative regulator of the PI3 kinase/PI3K activity associated with endosomal membranes. By modifying the phosphatidylinositol 3-phosphate/PtdInsP3 content of endosomal membranes may regulate endosome fusion, recycling, sorting and early to late endosome transport. This is WD repeat-containing protein 91 from Xenopus tropicalis (Western clawed frog).